A 124-amino-acid chain; its full sequence is Large ribosomal subunit protein mL52 (124 aa).

The N-terminal 23 residues, 1 to 23, are a transit peptide targeting the mitochondrion; sequence MAALGMLLSTGVRRLHCGSAARA. The interval 99-124 is disordered; that stretch reads LQEEKRKQQNALKPKGVLLQNPGPSQ.

Belongs to the mitochondrion-specific ribosomal protein mL52 family. Component of the mitochondrial ribosome large subunit (39S) which comprises a 16S rRNA and about 50 distinct proteins.

The protein resides in the mitochondrion. This Bos taurus (Bovine) protein is Large ribosomal subunit protein mL52 (MRPL52).